The primary structure comprises 314 residues: Taste receptor type 2 member 42 (314 aa).

Residues 1-7 are Extracellular-facing; sequence MATELDK. The helical transmembrane segment at 8-28 threads the bilayer; the sequence is IFLILEIAEFIIGMLGNVFIG. Residues 29 to 50 lie on the Cytoplasmic side of the membrane; sequence LVNCSEGIKNQKVFSADFILTC. Residues 51–71 traverse the membrane as a helical segment; the sequence is LAISTIGQLFVILFDSFLVGL. Residues 72-101 are Extracellular-facing; that stretch reads ASHLYTTYRLGKPVIMLWHMTNHLTTWLAT. A helical transmembrane segment spans residues 102–122; the sequence is CLSIFYFFKIAHFPHSLFLWL. Residues 123–127 are Cytoplasmic-facing; sequence RWRMN. A helical transmembrane segment spans residues 128–148; that stretch reads GMIVMLLILSLFLLIFNSLVL. Residues 149–187 lie on the Extracellular side of the membrane; that stretch reads EIFIDISLNIIDKSNLTLYLDESKTVYDKLSILKTLLSL. Asn163 carries an N-linked (GlcNAc...) asparagine glycan. Residues 188–208 form a helical membrane-spanning segment; that stretch reads TSFIPFSLSLTSLLFLFLSLV. Over 209–238 the chain is Cytoplasmic; it reads RHTRNLKLSSLGSRDSSTEAHRRAMKMVMS. The chain crosses the membrane as a helical span at residues 239-259; that stretch reads FLFLFIVHFFSLQVANWIFFM. At 260-265 the chain is on the extracellular side; it reads LWNNKY. A helical membrane pass occupies residues 266 to 286; the sequence is IKFAMLALNAFPSCHSFILIL. Residues 287–314 are Cytoplasmic-facing; it reads GNSKLRQTAVRLLWHLRNYTKTPNPLPL.

This sequence belongs to the G-protein coupled receptor T2R family.

The protein resides in the membrane. Its function is as follows. Receptor that may play a role in the perception of bitterness and is gustducin-linked. May play a role in sensing the chemical composition of the gastrointestinal content. The activity of this receptor may stimulate alpha gustducin, mediate PLC-beta-2 activation and lead to the gating of TRPM5. This chain is Taste receptor type 2 member 42 (TAS2R42), found in Pan troglodytes (Chimpanzee).